Reading from the N-terminus, the 452-residue chain is tRNA modification GTPase MnmE (452 aa).

(6S)-5-formyl-5,6,7,8-tetrahydrofolate is bound by residues arginine 21, glutamate 78, and lysine 118. In terms of domain architecture, TrmE-type G spans 214–375; the sequence is GMKVVIAGRP…LRDHLKQAMG (162 aa). Asparagine 224 contributes to the K(+) binding site. GTP is bound by residues 224–229, 243–249, and 268–271; these read NAGKSS, TDIAGTT, and DTAG. Serine 228 serves as a coordination point for Mg(2+). 3 residues coordinate K(+): threonine 243, isoleucine 245, and threonine 248. Residue threonine 249 participates in Mg(2+) binding. Position 452 (lysine 452) interacts with (6S)-5-formyl-5,6,7,8-tetrahydrofolate.

Belongs to the TRAFAC class TrmE-Era-EngA-EngB-Septin-like GTPase superfamily. TrmE GTPase family. As to quaternary structure, homodimer. Heterotetramer of two MnmE and two MnmG subunits. K(+) is required as a cofactor.

Its subcellular location is the cytoplasm. Its function is as follows. Exhibits a very high intrinsic GTPase hydrolysis rate. Involved in the addition of a carboxymethylaminomethyl (cmnm) group at the wobble position (U34) of certain tRNAs, forming tRNA-cmnm(5)s(2)U34. The protein is tRNA modification GTPase MnmE of Haemophilus influenzae (strain 86-028NP).